A 290-amino-acid chain; its full sequence is Probable septum site-determining protein MinC (290 aa).

The protein belongs to the MinC family. As to quaternary structure, interacts with MinD and FtsZ.

In terms of biological role, cell division inhibitor that blocks the formation of polar Z ring septums. Rapidly oscillates between the poles of the cell to destabilize FtsZ filaments that have formed before they mature into polar Z rings. Prevents FtsZ polymerization. The sequence is that of Probable septum site-determining protein MinC from Heliobacterium modesticaldum (strain ATCC 51547 / Ice1).